An 832-amino-acid chain; its full sequence is Spindle pole body component alp6 (832 aa).

The segment at 1–186 is interaction with mzt1; sequence MSEIHVKTAL…STETSSVQHT (186 aa). The residue at position 286 (T286) is a Phosphothreonine.

This sequence belongs to the TUBGCP family. As to quaternary structure, part of the gamma-tubulin complex. Interacts directly with mzt1. Interacts with mto1. Interacts with mto2.

The protein localises to the cytoplasm. It is found in the cytoskeleton. It localises to the microtubule organizing center. The protein resides in the spindle pole body. Functionally, component of the gamma tubule complex that is required for the regulation of both interphase microtubules and mitotic bipolar spindles. The polypeptide is Spindle pole body component alp6 (alp6) (Schizosaccharomyces pombe (strain 972 / ATCC 24843) (Fission yeast)).